The chain runs to 779 residues: Protein zer-1 homolog (779 aa).

Position 2 is an N-acetylalanine (Ala-2). LRR repeat units follow at residues 226 to 245 (SLVL…IVQL), 246 to 281 (HKLR…KLTR), and 291 to 315 (LGNL…KTDE). ARM repeat units lie at residues 440 to 480 (RSEQ…NFSI), 524 to 569 (DNDH…NITD), 571 to 613 (TPDN…NVAE), 615 to 656 (KELR…HIMF), and 727 to 769 (PDKY…HCSN).

It belongs to the zyg-11 family. Interacts with the ELOC-ELOB/Elongin BC complex. Part of an E3 ubiquitin ligase complex including ZER1, CUL2 and Elongin BC.

Serves as substrate adapter subunit in the E3 ubiquitin ligase complex ZYG11B-CUL2-Elongin BC. Acts redudantly with ZYG11B to target substrates bearing N-terminal glycine degrons for proteasomal degradation. Involved in the clearance of proteolytic fragments generated by caspase cleavage during apoptosis since N-terminal glycine degrons are strongly enriched at caspase cleavage sites. Also important in the quality control of protein N-myristoylation in which N-terminal glycine degrons are conditionally exposed after a failure of N-myristoylation. The protein is Protein zer-1 homolog of Mus musculus (Mouse).